The primary structure comprises 435 residues: Serine--tRNA ligase (435 aa).

The interval 48–68 (MKAQRNEASKKIGEAKRNGES) is disordered. The span at 49 to 68 (KAQRNEASKKIGEAKRNGES) shows a compositional bias: basic and acidic residues. An L-serine-binding site is contributed by 230–232 (TAE). ATP is bound at residue 261-263 (RSE). E284 contacts L-serine. 348-351 (EVSS) is a binding site for ATP. Residue S383 participates in L-serine binding.

Belongs to the class-II aminoacyl-tRNA synthetase family. Type-1 seryl-tRNA synthetase subfamily. In terms of assembly, homodimer. The tRNA molecule binds across the dimer.

It is found in the cytoplasm. It carries out the reaction tRNA(Ser) + L-serine + ATP = L-seryl-tRNA(Ser) + AMP + diphosphate + H(+). It catalyses the reaction tRNA(Sec) + L-serine + ATP = L-seryl-tRNA(Sec) + AMP + diphosphate + H(+). It participates in aminoacyl-tRNA biosynthesis; selenocysteinyl-tRNA(Sec) biosynthesis; L-seryl-tRNA(Sec) from L-serine and tRNA(Sec): step 1/1. Its function is as follows. Catalyzes the attachment of serine to tRNA(Ser). Is also able to aminoacylate tRNA(Sec) with serine, to form the misacylated tRNA L-seryl-tRNA(Sec), which will be further converted into selenocysteinyl-tRNA(Sec). This chain is Serine--tRNA ligase, found in Limosilactobacillus reuteri (strain DSM 20016) (Lactobacillus reuteri).